Consider the following 127-residue polypeptide: MVQKIKSMREFKELLGAAGNRLVVVEFSAQWCGPCKMIAPAFQAMSLQYRNVMFAQVDVDSSQELTEHCSIQVVPTFQMFKHSRKVTPFSRLKRILCCFRSGPGSKKIFEFQGADIEKLEEKIQELM.

The region spanning 2-127 (VQKIKSMREF…KLEEKIQELM (126 aa)) is the Thioredoxin domain. Residues Cys32 and Cys35 are joined by a disulfide bond.

It belongs to the thioredoxin family. As to expression, testis-specific. Expressed in spermatozoa, sperm tail, elongated and round spermatids.

It is found in the cytoplasm. The protein localises to the golgi apparatus. May be required for post-translational modifications of proteins required for acrosomal biogenesis. May act by reducing disulfide bonds within the sperm. In Rattus norvegicus (Rat), this protein is Thioredoxin domain-containing protein 8 (Txndc8).